Reading from the N-terminus, the 443-residue chain is UDP-N-acetylmuramate--L-alanine ligase (443 aa).

110–116 (GAHGKTS) contributes to the ATP binding site.

The protein belongs to the MurCDEF family.

The protein resides in the cytoplasm. The enzyme catalyses UDP-N-acetyl-alpha-D-muramate + L-alanine + ATP = UDP-N-acetyl-alpha-D-muramoyl-L-alanine + ADP + phosphate + H(+). Its pathway is cell wall biogenesis; peptidoglycan biosynthesis. Cell wall formation. In Streptococcus equi subsp. equi (strain 4047), this protein is UDP-N-acetylmuramate--L-alanine ligase.